The following is a 382-amino-acid chain: Flap endonuclease 1-A (382 aa).

Residues 1-104 (MGIHGLAKLI…GELAKRSERR (104 aa)) are N-domain. Residue aspartate 34 coordinates Mg(2+). Residues arginine 47 and arginine 70 each contribute to the DNA site. Residues aspartate 86, glutamate 158, glutamate 160, aspartate 179, and aspartate 181 each contribute to the Mg(2+) site. The segment at 122–253 (NIEKFTKRLV…KRAIDLIRQH (132 aa)) is I-domain. Glutamate 158 is a binding site for DNA. DNA is bound by residues glycine 231 and aspartate 233. Aspartate 233 contacts Mg(2+). The tract at residues 336 to 344 (TQGRLDDFF) is interaction with PCNA. The segment at 350–382 (VSSTKRKEAESKGSAKKKAKTGGTPAGKFKRGK) is disordered.

Belongs to the XPG/RAD2 endonuclease family. FEN1 subfamily. In terms of assembly, interacts with PCNA. Three molecules of fen1 bind to one PCNA trimer with each molecule binding to one PCNA monomer. PCNA stimulates the nuclease activity without altering cleavage specificity. Requires Mg(2+) as cofactor. Phosphorylated. Phosphorylation upon DNA damage induces relocalization to the nuclear plasma.

The protein resides in the nucleus. Its subcellular location is the nucleolus. It is found in the nucleoplasm. The protein localises to the mitochondrion. Functionally, structure-specific nuclease with 5'-flap endonuclease and 5'-3' exonuclease activities involved in DNA replication and repair. During DNA replication, cleaves the 5'-overhanging flap structure that is generated by displacement synthesis when DNA polymerase encounters the 5'-end of a downstream Okazaki fragment. It enters the flap from the 5'-end and then tracks to cleave the flap base, leaving a nick for ligation. Also involved in the long patch base excision repair (LP-BER) pathway, by cleaving within the apurinic/apyrimidinic (AP) site-terminated flap. Acts as a genome stabilization factor that prevents flaps from equilibrating into structures that lead to duplications and deletions. Also possesses 5'-3' exonuclease activity on nicked or gapped double-stranded DNA, and exhibits RNase H activity. Also involved in replication and repair of rDNA and in repairing mitochondrial DNA. This chain is Flap endonuclease 1-A (fen1-a), found in Xenopus laevis (African clawed frog).